The chain runs to 276 residues: 4-deoxy-L-threo-5-hexosulose-uronate ketol-isomerase 1 (276 aa).

The Zn(2+) site is built by His194, His196, Glu201, and His243.

It belongs to the KduI family. Zn(2+) serves as cofactor.

It carries out the reaction 5-dehydro-4-deoxy-D-glucuronate = 3-deoxy-D-glycero-2,5-hexodiulosonate. It participates in glycan metabolism; pectin degradation; 2-dehydro-3-deoxy-D-gluconate from pectin: step 4/5. Its function is as follows. Catalyzes the isomerization of 5-dehydro-4-deoxy-D-glucuronate to 3-deoxy-D-glycero-2,5-hexodiulosonate. The chain is 4-deoxy-L-threo-5-hexosulose-uronate ketol-isomerase 1 (kduI1) from Enterococcus faecalis (strain ATCC 700802 / V583).